The following is a 208-amino-acid chain: NAD(P)H-hydrate epimerase (208 aa).

One can recognise a YjeF N-terminal domain in the interval 11 to 208 (MRAKDQFTIN…VIVADDMGTY (198 aa)). 59–63 (NNGGD) lines the (6S)-NADPHX pocket. Asn60 and Asp122 together coordinate K(+). Residues 126-132 (GIGIDRP), Tyr137, and Asp155 each bind (6S)-NADPHX. Residue Ser158 coordinates K(+).

It belongs to the NnrE/AIBP family. K(+) serves as cofactor.

It carries out the reaction (6R)-NADHX = (6S)-NADHX. The catalysed reaction is (6R)-NADPHX = (6S)-NADPHX. Catalyzes the epimerization of the S- and R-forms of NAD(P)HX, a damaged form of NAD(P)H that is a result of enzymatic or heat-dependent hydration. This is a prerequisite for the S-specific NAD(P)H-hydrate dehydratase to allow the repair of both epimers of NAD(P)HX. This Limosilactobacillus fermentum (strain NBRC 3956 / LMG 18251) (Lactobacillus fermentum) protein is NAD(P)H-hydrate epimerase.